We begin with the raw amino-acid sequence, 519 residues long: Glucoamylase GLU1 (519 aa).

A signal peptide spans 1–27 (MKFGVLFSVFAAIVSALPLQEGPLNKR). Residues N115 and N127 are each glycosylated (N-linked (GlcNAc...) asparagine). W166 contributes to the substrate binding site. A glycan (N-linked (GlcNAc...) asparagine) is linked at N205. Residue D234 is the Proton acceptor of the active site. Residue E237 is the Proton donor of the active site.

It belongs to the glycosyl hydrolase 15 family.

The enzyme catalyses Hydrolysis of terminal (1-&gt;4)-linked alpha-D-glucose residues successively from non-reducing ends of the chains with release of beta-D-glucose.. The polypeptide is Glucoamylase GLU1 (GLU1) (Saccharomycopsis fibuligera (Yeast)).